The chain runs to 207 residues: Segregation and condensation protein B (207 aa).

Belongs to the ScpB family. Homodimer. Homodimerization may be required to stabilize the binding of ScpA to the Smc head domains. Component of a cohesin-like complex composed of ScpA, ScpB and the Smc homodimer, in which ScpA and ScpB bind to the head domain of Smc. The presence of the three proteins is required for the association of the complex with DNA.

It localises to the cytoplasm. Participates in chromosomal partition during cell division. May act via the formation of a condensin-like complex containing Smc and ScpA that pull DNA away from mid-cell into both cell halves. This Mycoplasmopsis pulmonis (strain UAB CTIP) (Mycoplasma pulmonis) protein is Segregation and condensation protein B.